Here is a 106-residue protein sequence, read N- to C-terminus: Large ribosomal subunit protein eL30 (106 aa).

Belongs to the eukaryotic ribosomal protein eL30 family. In terms of assembly, component of the large ribosomal subunit. Mature ribosomes consist of a small (40S) and a large (60S) subunit. The 40S subunit contains about 32 different proteins and 1 molecule of RNA (18S). The 60S subunit contains 45 different proteins and 3 molecules of RNA (25S, 5.8S and 5S).

It is found in the cytoplasm. Its function is as follows. Component of the ribosome, a large ribonucleoprotein complex responsible for the synthesis of proteins in the cell. The small ribosomal subunit (SSU) binds messenger RNAs (mRNAs) and translates the encoded message by selecting cognate aminoacyl-transfer RNA (tRNA) molecules. The large subunit (LSU) contains the ribosomal catalytic site termed the peptidyl transferase center (PTC), which catalyzes the formation of peptide bonds, thereby polymerizing the amino acids delivered by tRNAs into a polypeptide chain. The nascent polypeptides leave the ribosome through a tunnel in the LSU and interact with protein factors that function in enzymatic processing, targeting, and the membrane insertion of nascent chains at the exit of the ribosomal tunnel. In Candida albicans (strain SC5314 / ATCC MYA-2876) (Yeast), this protein is Large ribosomal subunit protein eL30.